Here is a 202-residue protein sequence, read N- to C-terminus: Heart- and neural crest derivatives-expressed protein 1 (202 aa).

Residues 83-135 (RKGVGGPKKERRRTESINSAFAELRECIPNVPADTKLSKIKTLRLATSYIAYL) enclose the bHLH domain. Residues 143 to 187 (SQPGEPEGFKAELKKADGRENKRKRETQPEVYSQPLAHGEKKLKG) are disordered. Over residues 149 to 162 (EGFKAELKKADGRE) the composition is skewed to basic and acidic residues.

As to quaternary structure, efficient DNA binding requires dimerization with another bHLH protein.

It localises to the nucleus. It is found in the nucleoplasm. The protein localises to the nucleolus. In terms of biological role, transcription factor. Plays an essential role in cardiac morphogenesis. The sequence is that of Heart- and neural crest derivatives-expressed protein 1 (HAND1) from Gallus gallus (Chicken).